A 332-amino-acid polypeptide reads, in one-letter code: L-lactate dehydrogenase A chain (332 aa).

Residue A2 is modified to N-acetylalanine. An N6-acetyllysine; alternate modification is found at K5. K5 carries the post-translational modification N6-succinyllysine; alternate. A Phosphotyrosine modification is found at Y10. N6-acetyllysine is present on K14. A Phosphothreonine modification is found at T18. 29-57 (GAVGMACAISILMKDLADELALVDVIEDK) provides a ligand contact to NAD(+). K57 bears the N6-acetyllysine; alternate mark. A Glycyl lysine isopeptide (Lys-Gly) (interchain with G-Cter in SUMO2); alternate cross-link involves residue K57. K81 carries the post-translational modification N6-acetyllysine. R99 contacts NAD(+). R106 is a binding site for substrate. Residue K118 is modified to N6-acetyllysine; alternate. The residue at position 118 (K118) is an N6-succinyllysine; alternate. K126 bears the N6-acetyllysine mark. N138 contacts NAD(+). The substrate site is built by N138 and R169. The active-site Proton acceptor is H193. Residues K224 and K232 each carry the N6-acetyllysine modification. Phosphotyrosine is present on Y239. K243 carries the N6-acetyllysine modification. T248 provides a ligand contact to substrate. The residue at position 309 (T309) is a Phosphothreonine. A Phosphoserine modification is found at S310. The residue at position 318 (K318) is an N6-acetyllysine; alternate. K318 carries the N6-succinyllysine; alternate modification. T322 bears the Phosphothreonine mark.

The protein belongs to the LDH/MDH superfamily. LDH family. Homotetramer. Interacts with PTEN upstream reading frame protein MP31. Interacts with folliculin FLCN; the interaction is direct and inhibits enzymatic activity. Post-translationally, ISGylated. Predominantly expressed in anaerobic tissues such as skeletal muscle and liver.

It localises to the cytoplasm. The enzyme catalyses (S)-lactate + NAD(+) = pyruvate + NADH + H(+). It participates in fermentation; pyruvate fermentation to lactate; (S)-lactate from pyruvate: step 1/1. Its activity is regulated as follows. Fermentation of pyruvate to lactate is inhibited when bound to folliculin FLCN, perhaps partly by FLCN preventing binding of cofactor NADH. Its function is as follows. Interconverts simultaneously and stereospecifically pyruvate and lactate with concomitant interconversion of NADH and NAD(+). The protein is L-lactate dehydrogenase A chain of Homo sapiens (Human).